A 310-amino-acid chain; its full sequence is Tagatose-6-phosphate kinase (310 aa).

Belongs to the carbohydrate kinase PfkB family. LacC subfamily.

It catalyses the reaction D-tagatofuranose 6-phosphate + ATP = D-tagatofuranose 1,6-bisphosphate + ADP + H(+). The protein operates within carbohydrate metabolism; D-tagatose 6-phosphate degradation; D-glyceraldehyde 3-phosphate and glycerone phosphate from D-tagatose 6-phosphate: step 1/2. The sequence is that of Tagatose-6-phosphate kinase from Lactococcus lactis subsp. lactis (Streptococcus lactis).